The sequence spans 745 residues: Jacalin-related lectin 4 (745 aa).

5 consecutive Jacalin-type lectin domains span residues 2 to 148, 151 to 294, 307 to 448, 451 to 594, and 601 to 744; these read AQKL…YFAP, PTKF…YFSP, AEKL…YFVT, PTKF…YFSR, and AETL…YVMP.

It belongs to the jacalin lectin family.

This Arabidopsis thaliana (Mouse-ear cress) protein is Jacalin-related lectin 4 (JAL4).